Reading from the N-terminus, the 297-residue chain is GTP-binding protein REM 1 (297 aa).

A compositionally biased stretch (polar residues) spans 1–10 (MTLNTQQEAK). Residues 1 to 73 (MTLNTQQEAK…DGWSSESSDS (73 aa)) are disordered. A Phosphoserine modification is found at serine 51. Positions 64–73 (DGWSSESSDS) are enriched in low complexity. Residues 87 to 94 (GDPGVGKT) and 194 to 197 (NKAD) each bind GTP. Positions 267–286 (ARRFLARLTARSARRRALKA) are calmodulin-binding.

This sequence belongs to the small GTPase superfamily. RGK family. In vitro, interacts with calmodulin in a calcium-dependent manner. Interacts 14-3-3 family members including YWHAE, YWHAH, YWHAQ, YWHAZ in a phosphorylation-dependent manner. High expression in cardiac muscle. Moderate expression in lung, skeletal muscle and kidney. Low levels in spleen and brain.

Functionally, promotes endothelial cell sprouting and actin cytoskeletal reorganization. May be involved in angiogenesis. May function in Ca(2+) signaling. The chain is GTP-binding protein REM 1 (Rem1) from Mus musculus (Mouse).